A 749-amino-acid polypeptide reads, in one-letter code: Phototropin (749 aa).

The region spanning 7–80 is the PAS 1 domain; it reads PASQLTKVLA…QKIRDAIKKG (74 aa). FMN contacts are provided by residues 56–61, Arg74, Asn89, Asn99, and Gln120; that span reads NCRFLQ. Cys57 is modified (S-4a-FMN cysteine). Residues 81–135 enclose the PAC 1 domain; it reads EACSVRLLNYRKDGTPFWNLLTVTPIKTPDGRVSKFVGVQVDVTSKTEGKALADN. The PAS 2 domain occupies 200–273; that stretch reads VALDLATTVE…DQIRAAIKEG (74 aa). Positions 274 to 328 constitute a PAC 2 domain; the sequence is SELTVRILNYTKAGKAFWNMFTLAPMRDQDGHARFFVGVQVDVTAQSTSPDKAPV. One can recognise a Protein kinase domain in the interval 404 to 712; that stretch reads FRRVKQLGAG…ANEIKSHPWF (309 aa). Residues 410–418 and Lys433 each bind ATP; that span reads LGAGDVGLV. Residue Asp529 is the Proton acceptor of the active site. 2 disordered regions span residues 563–591 and 729–749; these read KIGG…SSSG and PRRA…FDNY. Positions 713–749 constitute an AGC-kinase C-terminal domain; that stretch reads KGINWALLRHQQPPYVPRRASKAAGGSSTGGAAFDNY. A compositionally biased stretch (low complexity) spans 734 to 749; it reads KAAGGSSTGGAAFDNY.

This sequence belongs to the protein kinase superfamily. AGC Ser/Thr protein kinase family. FMN serves as cofactor. Autophosphorylated in response to blue light irradiation. Post-translationally, 2 molecules of FMN bind covalently to cysteines after exposure to blue light and are reversed in the dark. Expressed in gametes, pre-gametes and gametes generated by pre-gametes (at protein level).

The protein localises to the membrane. The catalysed reaction is L-seryl-[protein] + ATP = O-phospho-L-seryl-[protein] + ADP + H(+). It catalyses the reaction L-threonyl-[protein] + ATP = O-phospho-L-threonyl-[protein] + ADP + H(+). Its function is as follows. Protein kinase that acts as a blue light photoreceptor. Required for non-photochemical quenching (NPQ), a mechanism that converts and dissipates the harmful excess absorbed light energy into heat and protect the photosynthetic apparatus from photo-oxidative damage. Controls the energy-dependent chlorophyll fluorescence quenching (qE) activity of chlorophyll excited states by inducing the expression of the qE effector protein LHCSR3 in high light intensities. This chain is Phototropin, found in Chlamydomonas reinhardtii (Chlamydomonas smithii).